A 127-amino-acid polypeptide reads, in one-letter code: uncharacterized protein (127 aa).

The interval 69–94 is disordered; that stretch reads GDGGSVPEKGKHGILGAQGQEHPGLN.

This is an uncharacterized protein from Homo sapiens (Human).